The chain runs to 270 residues: S-adenosylmethionine decarboxylase proenzyme (270 aa).

S120 functions as the Schiff-base intermediate with substrate; via pyruvic acid in the catalytic mechanism. Residue S120 is modified to Pyruvic acid (Ser); by autocatalysis. H125 serves as the catalytic Proton acceptor; for processing activity. C148 (proton donor; for catalytic activity) is an active-site residue.

This sequence belongs to the prokaryotic AdoMetDC family. Type 2 subfamily. In terms of assembly, heterooctamer of four alpha and four beta chains arranged as a tetramer of alpha/beta heterodimers. It depends on pyruvate as a cofactor. Is synthesized initially as an inactive proenzyme. Formation of the active enzyme involves a self-maturation process in which the active site pyruvoyl group is generated from an internal serine residue via an autocatalytic post-translational modification. Two non-identical subunits are generated from the proenzyme in this reaction, and the pyruvate is formed at the N-terminus of the alpha chain, which is derived from the carboxyl end of the proenzyme. The post-translation cleavage follows an unusual pathway, termed non-hydrolytic serinolysis, in which the side chain hydroxyl group of the serine supplies its oxygen atom to form the C-terminus of the beta chain, while the remainder of the serine residue undergoes an oxidative deamination to produce ammonia and the pyruvoyl group blocking the N-terminus of the alpha chain.

The catalysed reaction is S-adenosyl-L-methionine + H(+) = S-adenosyl 3-(methylsulfanyl)propylamine + CO2. The protein operates within amine and polyamine biosynthesis; S-adenosylmethioninamine biosynthesis; S-adenosylmethioninamine from S-adenosyl-L-methionine: step 1/1. Functionally, catalyzes the decarboxylation of S-adenosylmethionine to S-adenosylmethioninamine (dcAdoMet), the propylamine donor required for the synthesis of the polyamines spermine and spermidine from the diamine putrescine. The chain is S-adenosylmethionine decarboxylase proenzyme from Alkaliphilus oremlandii (strain OhILAs) (Clostridium oremlandii (strain OhILAs)).